A 473-amino-acid chain; its full sequence is MKNLYSLRRFYHVETLFNGSLVVGGRDQESTGFAWWAGNARLINLSGKLLGAHVAHAGLIVFWAGAMNLFEVAHFVPEKPMYEQGLILLPHLATLGYGVGPGGEVIDTYPYFVSGVLHLISSAVLGFGGVYHSLVGPETLEESFPFFGYVWKDKNKMTTILGIHLIVLGFGAWLLVWKAMYFGGIYDTWAPGGGDVRIISNPTVSPGVIFSYILKSPFGGDGWIVSVDNMEDVIGGHIWIGTLCIFGGIWHILTKPWAWARRAFVWSGEAYLSYSLGAIALMGFTACCMSWFNTTAYPSEFYGPTGPEASQSQTFTFLVRDQRLGANVASAQGPTGLGKYLMRSPTGEIIFGGETMRFWDFRGPWLEPLRGPNGLDLNKLKNDIQPWQERRAAEYMTHAPLGSLNSVGGVATEINAVNYVSPRSWLATSHFCLGFFFFVGHLWHAGRARAAAAGFEKGIDRDNEPVLSMRPLD.

A propeptide spanning residues 1–14 (MKNLYSLRRFYHVE) is cleaved from the precursor. Thr-15 is modified (N-acetylthreonine). Thr-15 carries the phosphothreonine modification. The next 5 helical transmembrane spans lie at 69-93 (LFEV…PHLA), 134-155 (LVGP…KDKN), 178-200 (KAMY…RIIS), 255-275 (KPWA…LSYS), and 291-312 (WFNT…ASQS). Glu-367 is a binding site for [CaMn4O5] cluster. Residues 447–471 (RARAAAAGFEKGIDRDNEPVLSMRP) form a helical membrane-spanning segment.

It belongs to the PsbB/PsbC family. PsbC subfamily. As to quaternary structure, PSII is composed of 1 copy each of membrane proteins PsbA, PsbB, PsbC, PsbD, PsbE, PsbF, PsbH, PsbI, PsbJ, PsbK, PsbL, PsbM, PsbT, PsbX, PsbY, PsbZ, Psb30/Ycf12, at least 3 peripheral proteins of the oxygen-evolving complex and a large number of cofactors. It forms dimeric complexes. Binds multiple chlorophylls and provides some of the ligands for the Ca-4Mn-5O cluster of the oxygen-evolving complex. It may also provide a ligand for a Cl- that is required for oxygen evolution. PSII binds additional chlorophylls, carotenoids and specific lipids. is required as a cofactor.

The protein localises to the plastid. The protein resides in the chloroplast thylakoid membrane. In terms of biological role, one of the components of the core complex of photosystem II (PSII). It binds chlorophyll and helps catalyze the primary light-induced photochemical processes of PSII. PSII is a light-driven water:plastoquinone oxidoreductase, using light energy to abstract electrons from H(2)O, generating O(2) and a proton gradient subsequently used for ATP formation. The chain is Photosystem II CP43 reaction center protein from Chlorella vulgaris (Green alga).